Here is a 267-residue protein sequence, read N- to C-terminus: Glutamate racemase (267 aa).

Residues 10-11 (DS) and 42-43 (YG) each bind substrate. Catalysis depends on Cys73, which acts as the Proton donor/acceptor. Substrate is bound at residue 74 to 75 (NT). Catalysis depends on Cys183, which acts as the Proton donor/acceptor. Substrate is bound at residue 184 to 185 (TH).

It belongs to the aspartate/glutamate racemases family.

The enzyme catalyses L-glutamate = D-glutamate. It participates in cell wall biogenesis; peptidoglycan biosynthesis. Its function is as follows. Provides the (R)-glutamate required for cell wall biosynthesis. The sequence is that of Glutamate racemase from Lactobacillus acidophilus (strain ATCC 700396 / NCK56 / N2 / NCFM).